The following is a 337-amino-acid chain: Outer membrane protein assembly factor BamC (337 aa).

The signal sequence occupies residues 1–16 (MKKWLFPFAFVATLAG). A lipid anchor (N-palmitoyl cysteine) is attached at cysteine 17. Residue cysteine 17 is the site of S-diacylglycerol cysteine attachment.

This sequence belongs to the BamC family. As to quaternary structure, part of the Bam complex.

The protein localises to the cell outer membrane. Its function is as follows. Part of the outer membrane protein assembly complex, which is involved in assembly and insertion of beta-barrel proteins into the outer membrane. This chain is Outer membrane protein assembly factor BamC, found in Pasteurella multocida (strain Pm70).